A 556-amino-acid chain; its full sequence is Undecaprenyl phosphate-alpha-4-amino-4-deoxy-L-arabinose arabinosyl transferase (556 aa).

11 consecutive transmembrane segments (helical) span residues 5 to 25, 88 to 108, 116 to 136, 179 to 199, 207 to 227, 258 to 278, 296 to 316, 319 to 339, 355 to 375, 384 to 404, and 410 to 430; these read MIKL…LLPL, FASV…ALLL, LLAA…TYSV, FMTK…PVAL, LLLF…PWAL, APFW…LALL, FLLL…KGKL, YILP…SGLA, LAFG…IIMP, LTIV…AVSL, and WGYL…GSIP.

This sequence belongs to the glycosyltransferase 83 family.

The protein resides in the cell inner membrane. The catalysed reaction is 4-amino-4-deoxy-alpha-L-arabinopyranosyl di-trans,octa-cis-undecaprenyl phosphate + lipid IVA = lipid IIA + di-trans,octa-cis-undecaprenyl phosphate.. The protein operates within lipopolysaccharide metabolism; 4-amino-4-deoxy-beta-L-arabinose-lipid A biosynthesis. Catalyzes the transfer of the L-Ara4N moiety of the glycolipid undecaprenyl phosphate-alpha-L-Ara4N to lipid A. The modified arabinose is attached to lipid A and is required for resistance to polymyxin and cationic antimicrobial peptides. The polypeptide is Undecaprenyl phosphate-alpha-4-amino-4-deoxy-L-arabinose arabinosyl transferase (Pectobacterium carotovorum subsp. carotovorum (strain PC1)).